We begin with the raw amino-acid sequence, 214 residues long: uncharacterized protein (214 aa).

It belongs to the HHV-5 UL130 protein family. Forms the envelope pentamer complex (PC) composed of gH, gL, UL128, UL130, and UL131A. The pentamer interacts with host NRP2.

The protein resides in the virion membrane. Its function is as follows. Plays a role in viral entry into host cells. Forms a pentameric complex at the surface of the viral envelope together with gH, gL, UL130 and UL131. This complex is required for entry in epithelial, endothelial and myeloid host cells. Mechanistically, engages host receptor(s) including neurophilin 2/NRP2 to mediate infection. This is an uncharacterized protein from Human cytomegalovirus (strain AD169) (HHV-5).